The following is a 603-amino-acid chain: Elongation factor 4 (603 aa).

One can recognise a tr-type G domain in the interval 6–188; that stretch reads KYVRNFSIIA…DIVKNVPAPI (183 aa). GTP is bound by residues 18 to 23 and 135 to 138; these read DHGKST and NKID.

This sequence belongs to the TRAFAC class translation factor GTPase superfamily. Classic translation factor GTPase family. LepA subfamily.

Its subcellular location is the cell membrane. It catalyses the reaction GTP + H2O = GDP + phosphate + H(+). Required for accurate and efficient protein synthesis under certain stress conditions. May act as a fidelity factor of the translation reaction, by catalyzing a one-codon backward translocation of tRNAs on improperly translocated ribosomes. Back-translocation proceeds from a post-translocation (POST) complex to a pre-translocation (PRE) complex, thus giving elongation factor G a second chance to translocate the tRNAs correctly. Binds to ribosomes in a GTP-dependent manner. The chain is Elongation factor 4 from Finegoldia magna (strain ATCC 29328 / DSM 20472 / WAL 2508) (Peptostreptococcus magnus).